Reading from the N-terminus, the 60-residue chain is Large ribosomal subunit protein uL30 (60 aa).

The protein belongs to the universal ribosomal protein uL30 family. As to quaternary structure, part of the 50S ribosomal subunit.

This Shewanella denitrificans (strain OS217 / ATCC BAA-1090 / DSM 15013) protein is Large ribosomal subunit protein uL30.